Reading from the N-terminus, the 437-residue chain is MANVVVIGAQWGDEGKGKITDLLSRSADVVVRYQGGVNAGHTIVVEDKVLKLHLIPSGILYPDTICLIGSGTVVDPKVMIKEIKMLEDNDIDISGLKLASTAHVTMPYHRLLDLAMEQKRGDQKIGTTGRGIGPTYADKSQRNGIRIIDLMSREKLQERLQVPLSEKNGLLQKIYGIEPLIIDEIIEEYLDYGKQLKKHIVDCNRTIHQAARKKKNILFEGAQGTLLDLDHGTYPYVTSSNPVSGGACIGAGVGPTLIDRVIGVAKAYTTRVGEGPFPTELHGSINDQLCDRGGEFGTTTGRRRRCGWFDGVIGKYAVEVNGLDCLAITKLDVLDELEEIDICVAYELNGKRIDYFPTSVEDFEKCNPIFKKLPGWRCSTENCRRLEDLPPAAMSYLRFLAELMEVPIAIVSLGANRDQTIVIEDPIHGPKRALLNS.

GTP-binding positions include 12–18 (GDEGKGK) and 40–42 (GHT). Asp13 functions as the Proton acceptor in the catalytic mechanism. 2 residues coordinate Mg(2+): Asp13 and Gly40. Residues 13-16 (DEGK), 38-41 (NAGH), Thr128, Arg142, Gln223, Thr238, and Arg302 contribute to the IMP site. Residue His41 is the Proton donor of the active site. Residue 298 to 304 (TTTGRRR) participates in substrate binding. GTP contacts are provided by residues Arg304, 330 to 332 (KLD), and 412 to 414 (SLG).

It belongs to the adenylosuccinate synthetase family. Homodimer. Mg(2+) is required as a cofactor.

It localises to the cytoplasm. The enzyme catalyses IMP + L-aspartate + GTP = N(6)-(1,2-dicarboxyethyl)-AMP + GDP + phosphate + 2 H(+). The protein operates within purine metabolism; AMP biosynthesis via de novo pathway; AMP from IMP: step 1/2. Its function is as follows. Plays an important role in the de novo pathway of purine nucleotide biosynthesis. Catalyzes the first committed step in the biosynthesis of AMP from IMP. The polypeptide is Adenylosuccinate synthetase (Prochlorococcus marinus (strain NATL1A)).